The sequence spans 222 residues: THAP domain-containing protein 6 (222 aa).

The THAP-type zinc-finger motif lies at 1–89; it reads MVKCCSAIGC…LKPGVIPSIF (89 aa). Positions 139–142 match the HCFC1-binding motif (HBM) motif; that stretch reads EHSY. Residues 149 to 194 are a coiled coil; that stretch reads KKLKHKLDHVIGELEDTKESLRNVLDREKRFQKSLRKTIRELKDEC.

This chain is THAP domain-containing protein 6 (THAP6), found in Homo sapiens (Human).